Here is a 122-residue protein sequence, read N- to C-terminus: Cytochrome c-556 (122 aa).

Heme-binding residues include methionine 11, cysteine 111, cysteine 114, and histidine 115. 4 residues coordinate heme c: methionine 11, cysteine 111, cysteine 114, and histidine 115.

Monomer. In terms of processing, binds 1 heme c group covalently per subunit.

Its function is as follows. Low-spin monoheme cytochrome c. The sequence is that of Cytochrome c-556 from Agrobacterium tumefaciens (strain II Chrys).